Reading from the N-terminus, the 257-residue chain is Small ribosomal subunit protein eS1 (257 aa).

Residues Thr-236 to Val-257 form a disordered region. Positions Glu-239–Asp-248 are enriched in basic and acidic residues.

The protein belongs to the eukaryotic ribosomal protein eS1 family. Component of the small ribosomal subunit. Mature ribosomes consist of a small (40S) and a large (60S) subunit. The 40S subunit contains about 33 different proteins and 1 molecule of RNA (18S). The 60S subunit contains about 49 different proteins and 3 molecules of RNA (28S, 5.8S and 5S).

The protein localises to the cytoplasm. This chain is Small ribosomal subunit protein eS1, found in Brugia malayi (Filarial nematode worm).